The following is a 150-amino-acid chain: D-aminoacyl-tRNA deacylase (150 aa).

The Gly-cisPro motif, important for rejection of L-amino acids signature appears at glycine 138–proline 139.

The protein belongs to the DTD family. In terms of assembly, homodimer.

It is found in the cytoplasm. It carries out the reaction glycyl-tRNA(Ala) + H2O = tRNA(Ala) + glycine + H(+). The enzyme catalyses a D-aminoacyl-tRNA + H2O = a tRNA + a D-alpha-amino acid + H(+). In terms of biological role, an aminoacyl-tRNA editing enzyme that deacylates mischarged D-aminoacyl-tRNAs. Also deacylates mischarged glycyl-tRNA(Ala), protecting cells against glycine mischarging by AlaRS. Acts via tRNA-based rather than protein-based catalysis; rejects L-amino acids rather than detecting D-amino acids in the active site. By recycling D-aminoacyl-tRNA to D-amino acids and free tRNA molecules, this enzyme counteracts the toxicity associated with the formation of D-aminoacyl-tRNA entities in vivo and helps enforce protein L-homochirality. This chain is D-aminoacyl-tRNA deacylase, found in Flavobacterium johnsoniae (strain ATCC 17061 / DSM 2064 / JCM 8514 / BCRC 14874 / CCUG 350202 / NBRC 14942 / NCIMB 11054 / UW101) (Cytophaga johnsonae).